The primary structure comprises 96 residues: U-reduvitoxin-Pr12a (96 aa).

Positions 1-20 (MKTALLLFFALVFIAFETEA) are cleaved as a signal peptide. Disulfide bonds link Cys-21–Cys-38, Cys-33–Cys-53, and Cys-36–Cys-47. Pacifastin domains are found at residues 21 to 55 (CRPG…ICPP) and 59 to 94 (KLEC…CIHK). Residues 54-56 (PPR) are pro-Pro-Arg motif necessary for proteolytic processing. 3 cysteine pairs are disulfide-bonded: Cys-62-Cys-77, Cys-72-Cys-91, and Cys-75-Cys-86.

It belongs to the protease inhibitor I19 family. In terms of tissue distribution, expressed by the venom gland.

It is found in the secreted. Functionally, inhibits trypsin activity and prophenoloxidase (PPO) activation, an enzyme essential for both clotting and insect innate immune responses. It does not inhibit activity of chymotrypsin and protease K, and has no effect on phenoloxidase (PO) activity. The chain is U-reduvitoxin-Pr12a from Platymeris rhadamanthus (Red spot assassin bug).